A 446-amino-acid polypeptide reads, in one-letter code: Elongation factor Ts, mitochondrial (446 aa).

The N-terminal 33 residues, 1-33, are a transit peptide targeting the mitochondrion; that stretch reads MSGSRSALSVVRLAACAKPCTLGSTSSVLTRPF.

The protein belongs to the EF-Ts family.

Its subcellular location is the mitochondrion. Its function is as follows. Associates with the EF-Tu.GDP complex and induces the exchange of GDP to GTP. It remains bound to the aminoacyl-tRNA.EF-Tu.GTP complex up to the GTP hydrolysis stage on the ribosome. In Mycosarcoma maydis (Corn smut fungus), this protein is Elongation factor Ts, mitochondrial.